Here is a 124-residue protein sequence, read N- to C-terminus: MPTIQQLVRSERHKSSKKTKSPALKGCPQRRGVCTRVYTTTPKKPNSALRKVARVRLTSGFEVTAYIPGIGHNIQEHSVVLIRGGRVKDLPGVRYHIVRGILDASGVKDRKKSRSKYGAKQPKT.

Disordered stretches follow at residues 1 to 28 (MPTIQQLVRSERHKSSKKTKSPALKGCP) and 104 to 124 (ASGVKDRKKSRSKYGAKQPKT). Basic residues-rich tracts occupy residues 11 to 20 (ERHKSSKKTK) and 109 to 124 (DRKKSRSKYGAKQPKT).

The protein belongs to the universal ribosomal protein uS12 family. In terms of assembly, part of the 30S ribosomal subunit.

The protein localises to the plastid. It is found in the chloroplast. In terms of biological role, with S4 and S5 plays an important role in translational accuracy. Located at the interface of the 30S and 50S subunits. The sequence is that of Small ribosomal subunit protein uS12c (rps12) from Gracilaria tenuistipitata var. liui (Red alga).